The sequence spans 313 residues: Postacrosomal sheath WW domain-binding protein (313 aa).

A GRAM domain is found at 8–87 (TESRRGALIP…GLMSDCTIEQ (80 aa)). A run of 12 repeats spans residues 179-185 (YGPPPPG), 193-199 (YGTPPEG), 207-213 (YGAPPMG), 214-220 (YGAPPVG), 221-227 (YGVPPGG), 228-234 (YGVPPGG), 235-241 (YGVPPGG), 242-248 (YGAPPGG), 249-255 (YGVPPGG), 256-262 (YGAPPGG), 263-269 (YGAPPAG), and 270-276 (YGAPPAG). The segment at 179 to 276 (YGPPPPGYTV…PAGYGAPPAG (98 aa)) is 12 X 7 AA tandem repeat of Y-G-X-P-P-X-G. Residues 183 to 186 (PPGY) carry the PPxY motif 1 motif. Gly residues predominate over residues 254–264 (GGYGAPPGGYG). Residues 254 to 313 (GGYGAPPGGYGAPPAGYGAPPAGNEALPPAYEAPSAGNTAASHRSMTAQQETSLPTTSSS) form a disordered region. A compositionally biased stretch (low complexity) spans 265-276 (APPAGYGAPPAG). The PPxY motif 2 signature appears at 281 to 284 (PPAY). Residues 289 to 313 (AGNTAASHRSMTAQQETSLPTTSSS) show a composition bias toward polar residues.

Expressed in testis.

Its function is as follows. May play a role in meiotic resumption and pronuclear formation, mediated by a WW domain-signaling pathway during fertilization. This Bos taurus (Bovine) protein is Postacrosomal sheath WW domain-binding protein (WBP2NL).